A 66-amino-acid chain; its full sequence is MKAAELRNLTNEELMNLLEEKKRTLMNLRFQNVLGQLTDYSQISKTRKDIARIKTILRERELGVRR.

It belongs to the universal ribosomal protein uL29 family.

The polypeptide is Large ribosomal subunit protein uL29 (Thermosipho africanus (strain TCF52B)).